Here is a 2531-residue protein sequence, read N- to C-terminus: Neurogenic locus notch homolog protein 1 (2531 aa).

The signal sequence occupies residues 1 to 18 (MPRLLAPLLCLTLLPALA). Topologically, residues 19–1725 (ARGLRCSQPS…VEPPLPSQLH (1707 aa)) are extracellular. EGF-like domains follow at residues 20 to 58 (RGLR…QRCQ), 59 to 99 (DPSP…PLCL), 102 to 139 (LANA…KSCQ), and 140 to 176 (QADP…PTCR). 33 cysteine pairs are disulfide-bonded: cysteine 24-cysteine 37, cysteine 31-cysteine 46, cysteine 48-cysteine 57, cysteine 63-cysteine 74, cysteine 68-cysteine 87, cysteine 89-cysteine 98, cysteine 106-cysteine 117, cysteine 111-cysteine 127, cysteine 129-cysteine 138, cysteine 144-cysteine 155, cysteine 149-cysteine 164, cysteine 166-cysteine 175, cysteine 182-cysteine 195, cysteine 189-cysteine 204, cysteine 206-cysteine 215, cysteine 222-cysteine 233, cysteine 227-cysteine 243, cysteine 245-cysteine 254, cysteine 261-cysteine 272, cysteine 266-cysteine 281, cysteine 283-cysteine 292, cysteine 299-cysteine 312, cysteine 306-cysteine 321, cysteine 323-cysteine 332, cysteine 339-cysteine 350, cysteine 344-cysteine 359, cysteine 361-cysteine 370, cysteine 376-cysteine 387, cysteine 381-cysteine 398, cysteine 400-cysteine 409, cysteine 416-cysteine 429, cysteine 423-cysteine 438, and cysteine 440-cysteine 449. Asparagine 41 carries an N-linked (GlcNAc...) asparagine glycan. O-linked (Glc...) serine glycosylation occurs at serine 65. An O-linked (Fuc...) threonine glycan is attached at threonine 73. The O-linked (Fuc...) threonine glycan is linked to threonine 116. Residue serine 146 is glycosylated (O-linked (Glc...) serine). The region spanning 178–216 (DVNECSQNPGLCRHGGTCHNEIGSYRCACRATHTGPHCE) is the EGF-like 5; calcium-binding domain. A glycan (O-linked (Fuc...) threonine) is linked at threonine 194. The EGF-like 6 domain occupies 218–255 (PYVPCSPSPCQNGGTCRPTGDTTHECACLPGFAGQNCE). The O-linked (Fuc...) threonine; alternate glycan is linked to threonine 232. The O-linked (GalNAc...) threonine; alternate glycan is linked to threonine 232. Residues 257 to 293 (NVDDCPGNNCKNGGACVDGVNTYNCRCPPEWTGQYCT) form the EGF-like 7; calcium-binding domain. Residues 295–333 (DVDECQLMPNACQNGGTCHNSHGGYNCVCVNGWTGEDCS) enclose the EGF-like 8; calcium-binding domain. O-linked (Fuc...) threonine glycosylation occurs at threonine 311. The EGF-like 9; calcium-binding domain occupies 335–371 (NIDDCASAACFQGATCHDRVASFYCECPHGRTGLLCH). The O-linked (Glc...) serine glycan is linked to serine 341. An O-linked (Fuc...) threonine glycan is attached at threonine 349. The EGF-like 10 domain occupies 372-410 (LNDACISNPCNEGSNCDTNPVNGKAICTCPSGYTGPACS). Serine 378 carries O-linked (Glc...) serine glycosylation. An EGF-like 11; calcium-binding domain is found at 412–450 (DVDECALGANPCEHAGKCLNTLGSFECQCLQGYTGPRCE). The interaction with DLL4 stretch occupies residues 420–421 (AN). Residues threonine 432 and serine 435 each coordinate Ca(2+). A glycan (O-linked (Glc...) serine) is linked at serine 435. Residues 448–452 (RCEID) form an interaction with DLL4 region. Residues aspartate 452, valine 453, and glutamate 455 each contribute to the Ca(2+) site. The EGF-like 12; calcium-binding domain maps to 452–488 (DVNECISNPCQNDATCLDQIGEFQCICMPGYEGVYCE). 3 disulfide bridges follow: cysteine 456/cysteine 467, cysteine 461/cysteine 476, and cysteine 478/cysteine 487. O-linked (Glc...) serine glycosylation is present at serine 458. Threonine 466 carries an O-linked (Fuc...) threonine glycan. Positions 469 and 470 each coordinate Ca(2+). Ca(2+) is bound by residues asparagine 490, threonine 491, and glutamate 493. The region spanning 490 to 526 (NTDECASSPCLHNGRCVDKINEFLCQCPKGFSGHLCQ) is the EGF-like 13; calcium-binding domain. 75 disulfides stabilise this stretch: cysteine 494-cysteine 505, cysteine 499-cysteine 514, cysteine 516-cysteine 525, cysteine 532-cysteine 543, cysteine 537-cysteine 552, cysteine 554-cysteine 563, cysteine 570-cysteine 580, cysteine 575-cysteine 589, cysteine 591-cysteine 600, cysteine 607-cysteine 618, cysteine 612-cysteine 627, cysteine 629-cysteine 638, cysteine 645-cysteine 655, cysteine 650-cysteine 664, cysteine 666-cysteine 675, cysteine 682-cysteine 693, cysteine 687-cysteine 702, cysteine 704-cysteine 713, cysteine 720-cysteine 730, cysteine 725-cysteine 739, cysteine 741-cysteine 750, cysteine 757-cysteine 768, cysteine 762-cysteine 777, cysteine 779-cysteine 788, cysteine 795-cysteine 806, cysteine 800-cysteine 815, cysteine 817-cysteine 826, cysteine 833-cysteine 844, cysteine 838-cysteine 855, cysteine 857-cysteine 866, cysteine 873-cysteine 884, cysteine 878-cysteine 893, cysteine 895-cysteine 904, cysteine 911-cysteine 922, cysteine 916-cysteine 931, cysteine 933-cysteine 942, cysteine 949-cysteine 960, cysteine 954-cysteine 969, cysteine 971-cysteine 980, cysteine 987-cysteine 998, cysteine 992-cysteine 1007, cysteine 1009-cysteine 1018, cysteine 1025-cysteine 1036, cysteine 1030-cysteine 1045, cysteine 1047-cysteine 1056, cysteine 1063-cysteine 1074, cysteine 1068-cysteine 1083, cysteine 1085-cysteine 1094, cysteine 1101-cysteine 1122, cysteine 1116-cysteine 1131, cysteine 1133-cysteine 1142, cysteine 1149-cysteine 1160, cysteine 1154-cysteine 1169, cysteine 1171-cysteine 1180, cysteine 1187-cysteine 1198, cysteine 1192-cysteine 1207, cysteine 1209-cysteine 1218, cysteine 1225-cysteine 1244, cysteine 1238-cysteine 1253, cysteine 1255-cysteine 1264, cysteine 1271-cysteine 1284, cysteine 1276-cysteine 1293, cysteine 1295-cysteine 1304, cysteine 1311-cysteine 1322, cysteine 1316-cysteine 1334, cysteine 1336-cysteine 1345, cysteine 1352-cysteine 1363, cysteine 1357-cysteine 1372, cysteine 1374-cysteine 1383, cysteine 1391-cysteine 1403, cysteine 1397-cysteine 1414, cysteine 1416-cysteine 1425, cysteine 1449-cysteine 1472, cysteine 1454-cysteine 1467, and cysteine 1463-cysteine 1479. O-linked (Glc...) serine glycosylation occurs at serine 496. The Ca(2+) site is built by aspartate 507 and lysine 508. An EGF-like 14; calcium-binding domain is found at 528–564 (DVDECASTPCKNGAKCLDGPNTYTCVCTEGYTGTHCE). Serine 534 carries O-linked (Glc...) serine glycosylation. Positions 566–601 (DIDECDPDPCHYGLCKDGVATFTCLCQPGYTGHHCE) constitute an EGF-like 15; calcium-binding domain. One can recognise an EGF-like 16; calcium-binding domain in the interval 603–639 (NINECHSQPCRHGGTCQDRDNYYLCLCLKGTTGPNCE). Serine 609 carries an O-linked (Glc...) serine glycan. O-linked (Fuc...) threonine glycosylation occurs at threonine 617. The EGF-like 17; calcium-binding domain occupies 641-676 (NLDDCASNPCDSGTCLDKIDGYECACEPGYTGSMCN). Serine 647 carries an O-linked (Glc...) serine glycan. In terms of domain architecture, EGF-like 18; calcium-binding spans 678–714 (NIDECAGSPCHNGGTCEDGIAGFTCRCPEGYHDPTCL). O-linked (Fuc...) threonine glycosylation occurs at threonine 692. The EGF-like 19; calcium-binding domain occupies 716–751 (EVNECNSNPCIHGACRDGLNGYKCDCAPGWSGTNCD). Serine 722 is a glycosylation site (O-linked (Glc...) serine). The 37-residue stretch at 753-789 (NNNECESNPCVNGGTCKDMTSGYVCTCREGFSGPNCQ) folds into the EGF-like 20; calcium-binding domain. Serine 759 is a glycosylation site (O-linked (Glc...) serine). An O-linked (Fuc...) threonine glycan is attached at threonine 767. O-linked (GlcNAc) serine glycosylation occurs at serine 784. The EGF-like 21; calcium-binding domain maps to 791-827 (NINECASNPCLNQGTCIDDVAGYKCNCPLPYTGATCE). Serine 797 carries O-linked (Glc...) serine glycosylation. Residue threonine 805 is glycosylated (O-linked (Fuc...) threonine). One can recognise an EGF-like 22 domain in the interval 829–867 (VLAPCATSPCKNSGVCKESEDYESFSCVCPTGWQGQTCE). Residues 869 to 905 (DINECVKSPCRHGASCQNTNGSYRCLCQAGYTGRNCE) enclose the EGF-like 23; calcium-binding domain. N-linked (GlcNAc...) asparagine glycosylation is present at asparagine 888. O-linked (GlcNAc) threonine glycosylation is present at threonine 900. An EGF-like 24 domain is found at 907 to 943 (DIDDCRPNPCHNGGSCTDGVNAAFCDCLPGFQGAFCE). O-linked (Fuc) serine glycosylation occurs at serine 921. The 37-residue stretch at 945-981 (DINECASNPCQNGANCTDCVDSYTCTCPTGFNGIHCE) folds into the EGF-like 25; calcium-binding domain. Serine 951 carries an O-linked (Glc...) serine glycan. Asparagine 959 is a glycosylation site (N-linked (GlcNAc...) asparagine). The EGF-like 26 domain maps to 983 to 1019 (NTPDCTESSCFNGGTCVDGINSFTCLCPPGFTGSYCQ). O-linked (Fuc...) threonine glycosylation occurs at threonine 997. In terms of domain architecture, EGF-like 27; calcium-binding spans 1021–1057 (DVNECDSRPCLHGGTCQDSYGTYKCTCPQGYTGLNCQ). The O-linked (Glc...) serine glycan is linked to serine 1027. O-linked (Fuc...) threonine glycosylation is present at threonine 1035. EGF-like domains are found at residues 1059–1095 (LVRW…FNCD) and 1097–1143 (LSVS…SYCE). Residue serine 1065 is glycosylated (O-linked (Glc...) serine). Positions 1145–1181 (EVDECSPNPCQNGATCTDYLGGFSCKCVAGYHGSNCS) constitute an EGF-like 30; calcium-binding domain. The O-linked (Fuc...) threonine glycan is linked to threonine 1159. Asparagine 1179 carries an N-linked (GlcNAc...) asparagine glycan. Residues 1183-1219 (EINECLSQPCQNGGTCIDLTNTYKCSCPRGTQGVHCE) form the EGF-like 31; calcium-binding domain. An O-linked (Glc...) serine glycan is attached at serine 1189. Threonine 1197 is a glycosylation site (O-linked (Fuc...) threonine). In terms of domain architecture, EGF-like 32; calcium-binding spans 1221–1265 (NVDDCHPPLDPASRSPKCFNNGTCVDQVGGYTCTCPPGFVGERCE). N-linked (GlcNAc...) asparagine glycosylation occurs at asparagine 1241. 4 consecutive EGF-like domains span residues 1267–1305 (DVNE…RRCE), 1307–1346 (VING…ATCE), 1348–1384 (DART…PECQ), and 1387–1426 (ASSP…LLCH). Serine 1273 carries an O-linked (Glc...) serine glycan. O-linked (Fuc...) threonine glycosylation is present at threonine 1362. Residue threonine 1379 is glycosylated (O-linked (GlcNAc...) threonine). A glycan (O-linked (Fuc...) threonine; alternate) is linked at threonine 1402. Threonine 1402 is a glycosylation site (O-linked (GalNAc...) threonine; alternate). 3 LNR repeats span residues 1449–1489 (CELP…PWKN), 1490–1531 (CTQS…CNPL), and 1532–1571 (YDQY…RLAA). 4 residues coordinate Ca(2+): aspartate 1457, asparagine 1460, aspartate 1475, and aspartate 1478. N-linked (GlcNAc...) asparagine glycosylation is present at asparagine 1489. 5 disulfide bridges follow: cysteine 1490-cysteine 1514, cysteine 1496-cysteine 1509, cysteine 1505-cysteine 1521, cysteine 1536-cysteine 1549, and cysteine 1545-cysteine 1561. Asparagine 1587 carries N-linked (GlcNAc...) asparagine glycosylation. A glycan (O-linked (GalNAc...) threonine) is linked at threonine 1715. The interval 1718–1750 (PPLPSQLHLMYVAAAAFVLLFFVGCGVLLSRKR) is interaction with PSEN1. The chain crosses the membrane as a helical span at residues 1726–1746 (LMYVAAAAFVLLFFVGCGVLL). At 1747-2531 (SRKRRRQHGQ…QITHIPEAFK (785 aa)) the chain is on the cytoplasmic side. A Glycyl lysine isopeptide (Lys-Gly) (interchain with G-Cter in ubiquitin) cross-link involves residue lysine 1749. The segment at 1770–1798 (KKKRREPLGEDSVGLKPLKNASDGALMDD) is disordered. Threonine 1851 carries the post-translational modification Phosphothreonine. ANK repeat units lie at residues 1917 to 1946 (TGET…DANI), 1950 to 1980 (MGRT…DLDA), 1984 to 2013 (DGTT…DVNA), 2017 to 2046 (LGKS…NKDM), and 2050 to 2079 (KEET…NRDI). Residues 1937–1945 (LLEASADAN) form an HIF1AN-binding region. (3S)-3-hydroxyasparagine; by HIF1AN is present on asparagine 1945. An HIF1AN-binding region spans residues 2004–2012 (LINSHADVN). Asparagine 2012 is modified ((3S)-3-hydroxyasparagine; by HIF1AN). 3 disordered regions span residues 2141-2185 (SATQ…DSSS), 2382-2428 (QPQN…SLPV), and 2440-2531 (PTSL…EAFK). Over residues 2382–2395 (QPQNLQPPSQPHLS) the composition is skewed to low complexity. The span at 2440–2478 (PTSLPSSMVPPMTTTQFLTPPSQHSYSSSPVDNTPSHQL) shows a compositional bias: polar residues. The segment covering 2488 to 2503 (PSPESPDQWSSSSPHS) has biased composition (low complexity). The segment covering 2504-2524 (NISDWSEGISSPPTSMPSQIT) has biased composition (polar residues).

Belongs to the NOTCH family. Heterodimer of a C-terminal fragment N(TM) and an N-terminal fragment N(EC) which are probably linked by disulfide bonds. Interacts with DNER, DTX1, DTX2 and RBPJ/RBPSUH. Also interacts with MAML1, MAML2 and MAML3 which act as transcriptional coactivators for NOTCH1. Notch 1 intracellular domain interacts with SNW1; the interaction involves multimerized NOTCH1 NICD and is implicated in a formation of an intermediate preactivation complex which associates with DNA-bound CBF-1/RBPJ. The activated membrane-bound form interacts with AAK1 which promotes NOTCH1 stabilization. Forms a trimeric complex with FBXW7 and SGK1. Interacts with HIF1AN. HIF1AN negatively regulates the function of notch intracellular domain (NICD), accelerating myogenic differentiation. Interacts (via NICD) with SNAI1 (via zinc fingers); the interaction induces SNAI1 degradation via MDM2-mediated ubiquitination and inhibits SNAI1-induced cell invasion. Interacts (via NICD) with MDM2A. Interacts (via NICD) with BCL6; the interaction decreases MAML1 recruitment by NOTCH1 NICD on target genes DNA and inhibits NOTCH1 transactivation activity. Interacts with THBS4. Interacts (via the EGF-like repeat region) with CCN3 (via CTCK domain). Interacts (via EGF-like domains) with DLL4 (via N-terminal DSL and MNNL domains). Interacts with ZMIZ1. Interacts (via NICD domain) with MEGF10 (via the cytoplasmic domain). Interacts with DLL1 and JAG1. Interacts (via NICD domain) with PRAG1. Forms a complex with PRAG1, N1ICD and MAML1, in a MAML1-dependent manner. Interacts (via transmembrane region) with PSEN1; the interaction is direct. Interacts with ZFP64. Synthesized in the endoplasmic reticulum as an inactive form which is proteolytically cleaved by a furin-like convertase in the trans-Golgi network before it reaches the plasma membrane to yield an active, ligand-accessible form. Cleavage results in a C-terminal fragment N(TM) and a N-terminal fragment N(EC). Following ligand binding, it is cleaved by ADAM17 to yield a membrane-associated intermediate fragment called notch extracellular truncation (NEXT). Following endocytosis, this fragment is then cleaved by one of the catalytic subunits of gamma-secretase (PSEN1 or PSEN2) to release a Notch-derived peptide containing the intracellular domain (NICD) from the membrane. Post-translationally, phosphorylated. In terms of processing, O-glycosylated on the EGF-like domains. O-glucosylated at Ser-435 by KDELC1 and KDELC2. Contains both O-linked fucose and O-linked glucose in the EGF-like domains 11, 12 and 13, which are interacting with the residues on DLL4. O-linked glycosylation by GALNT11 is involved in determination of left/right symmetry: glycosylation promotes activation of NOTCH1, possibly by promoting cleavage by ADAM17, modulating the balance between motile and immotile (sensory) cilia at the left-right organiser (LRO). MFNG-, RFNG- and LFNG-mediated modification of O-fucose residues at specific EGF-like domains results in inhibition of its activation by JAG1 and enhancement of its activation by DLL1 via an increased binding to DLL1. Ubiquitinated. Undergoes 'Lys-29'-linked polyubiquitination by ITCH; promotes the lysosomal degradation of non-activated internalized NOTCH1. Deubiquitination by USP12 is required for transport of internalized non-activated receptor from late endosomes to lysosomes for degradation. Monoubiquitination at Lys-1749 is required for activation by gamma-secretase cleavage, it promotes interaction with AAK1, which stabilizes it. Deubiquitination by EIF3F is necessary for nuclear import of activated Notch. Post-translationally, hydroxylated at Asn-1945 and Asn-2012 by HIF1AN. Hydroxylation reduces affinity for HI1AN and may thus indirectly modulate negative regulation of NICD. Expressed in the brain, kidney and spleen. Expressed in postnatal central nervous system (CNS) germinal zones and, in early postnatal life, within numerous cells throughout the CNS. Found in both subventricular and ventricular germinal zones.

It is found in the cell membrane. Its subcellular location is the late endosome membrane. The protein localises to the nucleus. Functionally, functions as a receptor for membrane-bound ligands Jagged-1 (JAG1), Jagged-2 (JAG2) and Delta-1 (DLL1) to regulate cell-fate determination. Upon ligand activation through the released notch intracellular domain (NICD) it forms a transcriptional activator complex with RBPJ/RBPSUH and activates genes of the enhancer of split locus. Affects the implementation of differentiation, proliferation and apoptotic programs. Involved in angiogenesis; negatively regulates endothelial cell proliferation and migration and angiogenic sprouting. Involved in the maturation of both CD4(+) and CD8(+) cells in the thymus. Important for follicular differentiation and possibly cell fate selection within the follicle. During cerebellar development, functions as a receptor for neuronal DNER and is involved in the differentiation of Bergmann glia. Represses neuronal and myogenic differentiation. May play an essential role in postimplantation development, probably in some aspect of cell specification and/or differentiation. May be involved in mesoderm development, somite formation and neurogenesis. May enhance HIF1A function by sequestering HIF1AN away from HIF1A. Required for the THBS4 function in regulating protective astrogenesis from the subventricular zone (SVZ) niche after injury. Involved in determination of left/right symmetry by modulating the balance between motile and immotile (sensory) cilia at the left-right organiser (LRO). This is Neurogenic locus notch homolog protein 1 (Notch1) from Rattus norvegicus (Rat).